The sequence spans 144 residues: Large ribosomal subunit protein uL13 (144 aa).

The protein belongs to the universal ribosomal protein uL13 family. As to quaternary structure, part of the 50S ribosomal subunit.

This protein is one of the early assembly proteins of the 50S ribosomal subunit, although it is not seen to bind rRNA by itself. It is important during the early stages of 50S assembly. The polypeptide is Large ribosomal subunit protein uL13 (Ruminiclostridium cellulolyticum (strain ATCC 35319 / DSM 5812 / JCM 6584 / H10) (Clostridium cellulolyticum)).